Reading from the N-terminus, the 610-residue chain is Autophagy-related protein 22-1 (610 aa).

A disordered region spans residues 1 to 29 (MIFTSTPPAPPPADAQQRQPRYPGEDTTP). Residues 41-61 (YGIAAEVFAVCGVGSFLPLTL) traverse the membrane as a helical segment. N-linked (GlcNAc...) asparagine glycosylation occurs at Asn90. 3 consecutive transmembrane segments (helical) span residues 120–140 (SFAMYTFSLAVLVQALTLISF), 153–173 (LLLTFGLIGSVSSMLFVFISP), and 177–197 (ILGAILVVIGVTCLGSSFVVL). Residues 216–242 (KTEGEELPHLDSSGEYTRSGSFNRGDN) form a disordered region. The segment covering 229–239 (GEYTRSGSFNR) has biased composition (polar residues). The next 4 membrane-spanning stretches (helical) occupy residues 277–297 (GVGLGYCAAVLVQVLSILLLF), 310–330 (TLPLRFVLLLVGIWWFSFTVV), 379–399 (VVIFLIAWFLLSDAMATVSGT), and 415–435 (VGLLSITATLSGMTGAFLWPV). N-linked (GlcNAc...) asparagine glycosylation is present at Asn445. The next 4 membrane-spanning stretches (helical) occupy residues 450–470 (LCIALFEIIPLYGMLAYIPLV), 485–507 (FPLGIVHGLVSGGLSSYCRSFFG), 527–547 (KGSSFIGPAVVGVLIDATGQV), and 550–570 (GFFFIAVLIVLPIPLIWMVNA). A disordered region spans residues 586–610 (KSHGENSSEFGHPSEEAEGLLARNP). An N-linked (GlcNAc...) asparagine glycan is attached at Asn591.

Belongs to the ATG22 family.

It is found in the vacuole membrane. Its function is as follows. Vacuolar effluxer which mediate the efflux of amino acids resulting from autophagic degradation. The release of autophagic amino acids allows the maintenance of protein synthesis and viability during nitrogen starvation. The sequence is that of Autophagy-related protein 22-1 (atg22-1) from Aspergillus clavatus (strain ATCC 1007 / CBS 513.65 / DSM 816 / NCTC 3887 / NRRL 1 / QM 1276 / 107).